The following is a 233-amino-acid chain: Large ribosomal subunit protein uL1 (233 aa).

Belongs to the universal ribosomal protein uL1 family. In terms of assembly, part of the 50S ribosomal subunit.

Its function is as follows. Binds directly to 23S rRNA. The L1 stalk is quite mobile in the ribosome, and is involved in E site tRNA release. Protein L1 is also a translational repressor protein, it controls the translation of the L11 operon by binding to its mRNA. This chain is Large ribosomal subunit protein uL1, found in Shewanella pealeana (strain ATCC 700345 / ANG-SQ1).